Here is a 246-residue protein sequence, read N- to C-terminus: Proteolipid protein DM gamma (246 aa).

A run of 4 helical transmembrane segments spans residues 19 to 35 (LLAT…FCGC), 71 to 87 (VIYG…IILL), 118 to 134 (VFLT…VFGF), and 206 to 222 (FIVA…ALLI).

It belongs to the myelin proteolipid protein family. In terms of tissue distribution, highly expressed in white matter in myelinating shark brain.

It is found in the membrane. The chain is Proteolipid protein DM gamma from Squalus acanthias (Spiny dogfish).